The following is an 80-amino-acid chain: Cell division protein ZapB (80 aa).

The stretch at 3-80 forms a coiled coil; sequence FEVLEQLESK…ALLGKMDEVE (78 aa).

Belongs to the ZapB family. As to quaternary structure, homodimer. The ends of the coiled-coil dimer bind to each other, forming polymers. Interacts with FtsZ.

It localises to the cytoplasm. Non-essential, abundant cell division factor that is required for proper Z-ring formation. It is recruited early to the divisome by direct interaction with FtsZ, stimulating Z-ring assembly and thereby promoting cell division earlier in the cell cycle. Its recruitment to the Z-ring requires functional FtsA or ZipA. This chain is Cell division protein ZapB, found in Vibrio parahaemolyticus serotype O3:K6 (strain RIMD 2210633).